A 393-amino-acid chain; its full sequence is MNLSATEKDLMIVNMGPHHPSMHGVLRLIVTLDGEDVVDCEPILGYLHRGMEKIAENRTIIQYLPYVTRWDYLATMFTEAITVNGPEQLGNIQVPKRASYIRVIMLELSRIASHLLWLGPFMADIGAQTPFFYIFRERELVYDLFEAATGMRMMHNYFRIGGVAADLPYGWLDKCLDFCDYFLTGIVEYQKLITRNPIFLERVEGIGVIGGEEAINWGLSGPMLRASGIKWDLRKVDHYECYDEFDWEIQWQKEGDSLARYLVRISEMTESIKIIQQALEGIPGGPYENLEIRCFDRERDPEWNDFEYRFISKKPSPTFELPRQELYARMEAPKGELGIFLIGDQSGFPWRWKIRPPGFINLQILPQLVKRMKLADIMTILGSIDIIMGEVDR.

Belongs to the complex I 49 kDa subunit family. In terms of assembly, NDH is composed of at least 16 different subunits, 5 of which are encoded in the nucleus.

It is found in the plastid. The protein localises to the chloroplast thylakoid membrane. The enzyme catalyses a plastoquinone + NADH + (n+1) H(+)(in) = a plastoquinol + NAD(+) + n H(+)(out). It catalyses the reaction a plastoquinone + NADPH + (n+1) H(+)(in) = a plastoquinol + NADP(+) + n H(+)(out). In terms of biological role, NDH shuttles electrons from NAD(P)H:plastoquinone, via FMN and iron-sulfur (Fe-S) centers, to quinones in the photosynthetic chain and possibly in a chloroplast respiratory chain. The immediate electron acceptor for the enzyme in this species is believed to be plastoquinone. Couples the redox reaction to proton translocation, and thus conserves the redox energy in a proton gradient. This Gossypium hirsutum (Upland cotton) protein is NAD(P)H-quinone oxidoreductase subunit H, chloroplastic.